We begin with the raw amino-acid sequence, 407 residues long: SERPINE1 mRNA-binding protein 1 (407 aa).

A Phosphoserine modification is found at serine 25. The interval 33-227 (AAENKKKEAG…GSGSHNWGTV (195 aa)) is disordered. The segment covering 51 to 68 (AKSAAQAAAQTNSNAAGK) has biased composition (low complexity). Lysine 52 is subject to N6-acetyllysine; alternate. Lysine 52 participates in a covalent cross-link: Glycyl lysine isopeptide (Lys-Gly) (interchain with G-Cter in SUMO1); alternate. Lysine 68 is subject to N6-acetyllysine. 3 stretches are compositionally biased toward basic and acidic residues: residues 70-80 (LRKESQKDRKN), 89-114 (ADKK…RRPD), and 122-162 (KLID…ERPI). Lysine 102 participates in a covalent cross-link: Glycyl lysine isopeptide (Lys-Gly) (interchain with G-Cter in SUMO2). N6-acetyllysine occurs at positions 122 and 140. Residues 164–182 (GRGGLGRGRGGRGRGMGRG) show a composition bias toward gly residues. Residues arginine 165 and arginine 188 each carry the omega-N-methylarginine modification. Positions 183 to 199 (DGFDSRGKREFDRHSGS) are enriched in basic and acidic residues. 5 positions are modified to phosphoserine: serine 197, serine 199, serine 203, serine 205, and serine 208. N6-acetyllysine; alternate is present on lysine 211. Residue lysine 211 forms a Glycyl lysine isopeptide (Lys-Gly) (interchain with G-Cter in SUMO2); alternate linkage. At arginine 216 the chain carries Omega-N-methylarginine. A Phosphoserine modification is found at serine 221. At threonine 226 the chain carries Phosphothreonine. Residue lysine 228 forms a Glycyl lysine isopeptide (Lys-Gly) (interchain with G-Cter in SUMO1); alternate linkage. A Glycyl lysine isopeptide (Lys-Gly) (interchain with G-Cter in SUMO2); alternate cross-link involves residue lysine 228. Phosphoserine occurs at positions 231, 234, and 237. Serine 234 is modified (phosphothreonine). A Phosphothreonine modification is found at lysine 240. Residues 242-256 (ISYNCSDLDQSNVTE) show a composition bias toward polar residues. Disordered regions lie at residues 242–288 (ISYN…KEMT) and 327–407 (SKSE…PALA). The segment covering 261-274 (GEEHPVADTENKEN) has biased composition (basic and acidic residues). A Glycyl lysine isopeptide (Lys-Gly) (interchain with G-Cter in SUMO2) cross-link involves residue lysine 280. The segment covering 327–341 (SKSEEAHAEDSVMDH) has biased composition (basic and acidic residues). Lysine 328 is subject to N6-acetyllysine. Serine 329 carries the post-translational modification Phosphoserine. The segment covering 362–371 (GRPGRGGRGG) has biased composition (gly residues). An omega-N-methylarginine mark is found at arginine 363, arginine 366, and arginine 369. A phosphoserine mark is found at serine 391 and serine 393.

It belongs to the SERBP1-HABP4 family. As to quaternary structure, associates with mature 80S ribosomes. Interacts with EEF2/eEF2; interaction sequesters EEF2/eEF2 at the A-site of the ribosome, thereby blocking the interaction sites of the mRNA-tRNA complex, promoting ribosome stabilization and hibernation. Interacts with SPIN1. Interacts with CHD3 and TDRD3. Interacts with ZDHHC17 (via ANK repeats). In terms of processing, phosphorylation by MTOR inhibits SERBP1 and relieves ribosome hibernation.

The protein resides in the cytoplasm. It localises to the nucleus. Its subcellular location is the perinuclear region. In terms of biological role, ribosome-binding protein that promotes ribosome hibernation, a process during which ribosomes are stabilized in an inactive state and preserved from proteasomal degradation. Acts via its association with EEF2/eEF2 factor, sequestering EEF2/eEF2 at the A-site of the ribosome and promoting ribosome stabilization and storage in an inactive state. May also play a role in the regulation of mRNA stability: binds to the 3'-most 134 nt of the SERPINE1/PAI1 mRNA, a region which confers cyclic nucleotide regulation of message decay. Seems to play a role in PML-nuclear bodies formation. The polypeptide is SERPINE1 mRNA-binding protein 1 (Mus musculus (Mouse)).